The sequence spans 373 residues: tRNA/tmRNA (uracil-C(5))-methyltransferase (373 aa).

S-adenosyl-L-methionine contacts are provided by glutamine 190, tyrosine 219, asparagine 224, glutamate 240, and aspartate 300. Cysteine 325 serves as the catalytic Nucleophile. The Proton acceptor role is filled by glutamate 359.

Belongs to the class I-like SAM-binding methyltransferase superfamily. RNA M5U methyltransferase family. TrmA subfamily.

It carries out the reaction uridine(54) in tRNA + S-adenosyl-L-methionine = 5-methyluridine(54) in tRNA + S-adenosyl-L-homocysteine + H(+). The catalysed reaction is uridine(341) in tmRNA + S-adenosyl-L-methionine = 5-methyluridine(341) in tmRNA + S-adenosyl-L-homocysteine + H(+). Its function is as follows. Dual-specificity methyltransferase that catalyzes the formation of 5-methyluridine at position 54 (m5U54) in all tRNAs, and that of position 341 (m5U341) in tmRNA (transfer-mRNA). The protein is tRNA/tmRNA (uracil-C(5))-methyltransferase of Chromohalobacter salexigens (strain ATCC BAA-138 / DSM 3043 / CIP 106854 / NCIMB 13768 / 1H11).